The primary structure comprises 476 residues: Cyclase-associated protein 1 (476 aa).

Disordered stretches follow at residues K224–M262 and G277–M319. Over residues K231 to P243 the composition is skewed to pro residues. Residues S246–S256 are compositionally biased toward low complexity. Positions K280–R293 are enriched in basic and acidic residues. A C-CAP/cofactor C-like domain is found at P316 to L453.

This sequence belongs to the CAP family. As to expression, expressed in roots, cotyledons, leaves, stems, flowers, pollen and shoots. Not detected in siliques.

In terms of biological role, actin monomer binding protein that accelerates the exchange of ADP for ATP. Regulates the pool of unpolymerized ATP-actin. Key intermediate between actin-depolymerizing factor (ADF)-mediated disassembly and the profilin-based nucleation and elongation machinery. The chain is Cyclase-associated protein 1 (CAP1) from Arabidopsis thaliana (Mouse-ear cress).